The sequence spans 272 residues: Universal stress protein MT2699 (272 aa).

Residues glycine 15, 109-115 (GSVGIGR), and 123-124 (ST) contribute to the ATP site.

The protein belongs to the universal stress protein A family.

In Mycobacterium tuberculosis (strain CDC 1551 / Oshkosh), this protein is Universal stress protein MT2699.